The sequence spans 112 residues: MSNIYDSANELSRGLRGLPEYKTVKAAKDAIAADAEASKIFTEYLAFQEEIQKLAQTGQMPDASFQAKMEGFGKQIQGNSLLSEFFTKQQQLAIYLSDIEKIVFEPVSELLK.

It belongs to the UPF0342 family.

The polypeptide is UPF0342 protein SPT_0901 (Streptococcus pneumoniae (strain Taiwan19F-14)).